A 425-amino-acid chain; its full sequence is Enolase (425 aa).

Gln162 is a binding site for (2R)-2-phosphoglycerate. The active-site Proton donor is Glu204. Mg(2+) contacts are provided by Asp241, Glu284, and Asp311. The (2R)-2-phosphoglycerate site is built by Lys336, Arg365, Ser366, and Lys387. Catalysis depends on Lys336, which acts as the Proton acceptor.

Belongs to the enolase family. Mg(2+) is required as a cofactor.

The protein resides in the cytoplasm. It localises to the secreted. Its subcellular location is the cell surface. The enzyme catalyses (2R)-2-phosphoglycerate = phosphoenolpyruvate + H2O. Its pathway is carbohydrate degradation; glycolysis; pyruvate from D-glyceraldehyde 3-phosphate: step 4/5. Functionally, catalyzes the reversible conversion of 2-phosphoglycerate (2-PG) into phosphoenolpyruvate (PEP). It is essential for the degradation of carbohydrates via glycolysis. In Brucella abortus (strain S19), this protein is Enolase.